The sequence spans 707 residues: UvrABC system protein C (707 aa).

The GIY-YIG domain occupies 14 to 94; the sequence is AEPGCYLMKD…IKKHRPRFNV (81 aa). The UVR domain occupies 206–241; the sequence is GELVERLRGRMAGAAEGLRFEEAARLRDQLQAVERS. Residues 654-684 form a disordered region; the sequence is PDAPPAAADEPSGAPEGTPAGGPAEAIPDAA. Residues 658–684 are compositionally biased toward low complexity; sequence PAAADEPSGAPEGTPAGGPAEAIPDAA.

It belongs to the UvrC family. As to quaternary structure, interacts with UvrB in an incision complex.

It is found in the cytoplasm. In terms of biological role, the UvrABC repair system catalyzes the recognition and processing of DNA lesions. UvrC both incises the 5' and 3' sides of the lesion. The N-terminal half is responsible for the 3' incision and the C-terminal half is responsible for the 5' incision. This chain is UvrABC system protein C, found in Anaeromyxobacter dehalogenans (strain 2CP-C).